Reading from the N-terminus, the 835-residue chain is Protein translocase subunit SecA 1 (835 aa).

ATP is bound by residues Q85, G103 to T107, and D492. Residues V788–V807 are disordered. 4 residues coordinate Zn(2+): C819, C821, C830, and C831.

The protein belongs to the SecA family. Monomer and homodimer. Part of the essential Sec protein translocation apparatus which comprises SecA, SecYEG and auxiliary proteins SecDF. Other proteins may also be involved. Zn(2+) serves as cofactor.

It localises to the cell membrane. Its subcellular location is the cytoplasm. It catalyses the reaction ATP + H2O + cellular proteinSide 1 = ADP + phosphate + cellular proteinSide 2.. Functionally, part of the Sec protein translocase complex. Interacts with the SecYEG preprotein conducting channel. Has a central role in coupling the hydrolysis of ATP to the transfer of proteins into and across the cell membrane, serving as an ATP-driven molecular motor driving the stepwise translocation of polypeptide chains across the membrane. The polypeptide is Protein translocase subunit SecA 1 (Bacillus thuringiensis subsp. konkukian (strain 97-27)).